Reading from the N-terminus, the 303-residue chain is Protein SULFUR DEFICIENCY-INDUCED 2 (303 aa).

The stretch at 62-89 forms a coiled coil; that stretch reads RVDSALKDMALLMKQQNRAEEAIDAIQS. TPR repeat units lie at residues 64–97, 100–133, 160–193, and 195–226; these read DSAL…CSRQ, ESLD…IYQG, SRIL…EPDA, and KACN…ENKE. A coiled-coil region spans residues 232–253; that stretch reads RLMARVQELLSELKPQEEEAAA.

Belongs to the MS5 protein family.

It is found in the nucleus. Its function is as follows. Involved in the utilization of stored sulfate under sulfur-deficient conditions. This Arabidopsis thaliana (Mouse-ear cress) protein is Protein SULFUR DEFICIENCY-INDUCED 2.